The following is a 238-amino-acid chain: 5'-deoxynucleotidase YBR242W (238 aa).

The 107-residue stretch at isoleucine 77–leucine 183 folds into the HD domain. Residues histidine 80, histidine 108, aspartate 109, glutamate 112, aspartate 117, isoleucine 118, and aspartate 178 each coordinate a divalent metal cation.

It belongs to the HDDC2 family. In terms of assembly, homodimer. The cofactor is Mn(2+). Requires Co(2+) as cofactor. Mg(2+) is required as a cofactor.

It carries out the reaction a 2'-deoxyribonucleoside 5'-phosphate + H2O = a 2'-deoxyribonucleoside + phosphate. Functionally, catalyzes the dephosphorylation of the nucleoside 5'-monophosphates deoxyadenosine monophosphate (dAMP), deoxycytidine monophosphate (dCMP), deoxyguanosine monophosphate (dGMP) and deoxythymidine monophosphate (dTMP). The protein is 5'-deoxynucleotidase YBR242W of Saccharomyces cerevisiae (strain ATCC 204508 / S288c) (Baker's yeast).